The chain runs to 462 residues: Protein phosphatase 1M (462 aa).

Residues 1–10 (MSAGWFRRRF) are compositionally biased toward basic residues. Residues 1-66 (MSAGWFRRRF…PVRSPARGRT (66 aa)) are disordered. Residues 100–452 (EFGIEEDQEW…DDVSVFVIPL (353 aa)) enclose the PPM-type phosphatase domain. Mn(2+) contacts are provided by Asp127 and Gly128.

This sequence belongs to the PP2C family. Mg(2+) serves as cofactor. It depends on Mn(2+) as a cofactor. As to expression, widely expressed with highest levels in testis and lower levels in lung, kidney and brain.

The protein localises to the nucleus. The enzyme catalyses O-phospho-L-seryl-[protein] + H2O = L-seryl-[protein] + phosphate. It carries out the reaction O-phospho-L-threonyl-[protein] + H2O = L-threonyl-[protein] + phosphate. The chain is Protein phosphatase 1M from Mus musculus (Mouse).